Here is a 445-residue protein sequence, read N- to C-terminus: Probable D-serine dehydratase (445 aa).

Position 116 is an N6-(pyridoxal phosphate)lysine (K116).

It belongs to the serine/threonine dehydratase family. DsdA subfamily. It depends on pyridoxal 5'-phosphate as a cofactor.

The enzyme catalyses D-serine = pyruvate + NH4(+). The chain is Probable D-serine dehydratase from Bacillus mycoides (strain KBAB4) (Bacillus weihenstephanensis).